Consider the following 174-residue polypeptide: MNYFELFKFPPAFDIDTALLAERYRELQRAVHPDKFANDTEQQKLLSVQRTAQVNDGFQTLKDPIRRAEHMLSLRGIELSHETTTVKDTGFLMQQMEWREALEDIRDSADPQASIDELYQSFAEYREQLTQQLTQLLTSEQAEDALLAADQVRKLKFMAKLHDELTRVEDALLD.

The J domain occupies N2–L74.

The protein belongs to the HscB family. In terms of assembly, interacts with HscA and stimulates its ATPase activity.

In terms of biological role, co-chaperone involved in the maturation of iron-sulfur cluster-containing proteins. Seems to help targeting proteins to be folded toward HscA. This chain is Co-chaperone protein HscB homolog, found in Shewanella baltica (strain OS195).